A 557-amino-acid polypeptide reads, in one-letter code: Potassium-transporting ATPase potassium-binding subunit (557 aa).

12 helical membrane passes run 5–25, 63–83, 132–152, 170–190, 253–273, 283–303, 329–349, 356–376, 379–399, 416–436, 484–504, and 526–546; these read GFLL…PLGS, LCAI…MLLG, GLTV…FALI, LLRI…LFFI, FVQM…FGEV, LLWA…WAEV, VLVS…AVIA, ALGG…FGGV, GLYG…LMIG, LTAL…ALAM, LLAF…MAIA, and LFVG…FIPA.

The protein belongs to the KdpA family. As to quaternary structure, the system is composed of three essential subunits: KdpA, KdpB and KdpC.

It localises to the cell inner membrane. Part of the high-affinity ATP-driven potassium transport (or Kdp) system, which catalyzes the hydrolysis of ATP coupled with the electrogenic transport of potassium into the cytoplasm. This subunit binds the periplasmic potassium ions and delivers the ions to the membrane domain of KdpB through an intramembrane tunnel. The polypeptide is Potassium-transporting ATPase potassium-binding subunit (Escherichia coli O139:H28 (strain E24377A / ETEC)).